The primary structure comprises 793 residues: Peroxidase-like protein (793 aa).

The first 20 residues, 1-20 (MNLFICHVFLLLLHGYLIIC), serve as a signal peptide directing secretion.

Belongs to the peroxidase family. Prismatic layer of shell (at protein level). Expressed primarily in the mantle with highest level in the mantle edge and lower level in the mantle pallium.

It is found in the secreted. This Margaritifera margaritifera (Freshwater pearl mussel) protein is Peroxidase-like protein.